Here is a 231-residue protein sequence, read N- to C-terminus: Uracil phosphoribosyltransferase (231 aa).

Lys38–Arg42 is a GTP binding site. Residues Arg87, Arg112, and Asp140–Thr148 contribute to the 5-phospho-alpha-D-ribose 1-diphosphate site. Uracil is bound by residues Ile203 and Gly208–Ala210. Asp209 contacts 5-phospho-alpha-D-ribose 1-diphosphate.

This sequence belongs to the UPRTase family. The cofactor is Mg(2+).

It carries out the reaction UMP + diphosphate = 5-phospho-alpha-D-ribose 1-diphosphate + uracil. It participates in pyrimidine metabolism; UMP biosynthesis via salvage pathway; UMP from uracil: step 1/1. Its activity is regulated as follows. Allosterically activated by GTP. In terms of biological role, catalyzes the conversion of uracil and 5-phospho-alpha-D-ribose 1-diphosphate (PRPP) to UMP and diphosphate. The protein is Uracil phosphoribosyltransferase of Methanococcus maripaludis (strain C6 / ATCC BAA-1332).